The primary structure comprises 650 residues: Probable LIM domain-containing serine/threonine-protein kinase DDB_G0287001 (650 aa).

LIM zinc-binding domains follow at residues 4 to 63 (NNCG…KLNA) and 64 to 122 (RKCF…PSDK). Disordered stretches follow at residues 118–138 (KPSD…LPGK), 171–197 (LSSS…SSFM), and 293–320 (LLNS…NLNT). Gly residues predominate over residues 173–188 (SSGGSGNSISGSGGTN). Residues 386–643 (VAFGDVIASG…DTLKKISESL (258 aa)) form the Protein kinase domain. ATP-binding positions include 392–400 (IASGASGKV) and Lys413. Asp509 acts as the Proton acceptor in catalysis.

This sequence belongs to the protein kinase superfamily. TKL Ser/Thr protein kinase family.

It carries out the reaction L-seryl-[protein] + ATP = O-phospho-L-seryl-[protein] + ADP + H(+). It catalyses the reaction L-threonyl-[protein] + ATP = O-phospho-L-threonyl-[protein] + ADP + H(+). This is Probable LIM domain-containing serine/threonine-protein kinase DDB_G0287001 from Dictyostelium discoideum (Social amoeba).